The sequence spans 110 residues: Cytochrome c6 (110 aa).

The N-terminal stretch at 1–25 is a signal peptide; it reads MKKTLSVLFTAFSFCVIGFTQVAFA. Heme c contacts are provided by C39, C42, H43, and M83.

It belongs to the cytochrome c family. PetJ subfamily. In terms of assembly, monomer. Binds 1 heme c group covalently per subunit.

It localises to the plastid. The protein localises to the chloroplast thylakoid lumen. In terms of biological role, functions as an electron carrier between membrane-bound cytochrome b6-f and photosystem I in oxygenic photosynthesis. The polypeptide is Cytochrome c6 (petJ) (Porphyra purpurea (Red seaweed)).